Here is a 199-residue protein sequence, read N- to C-terminus: GTP cyclohydrolase-2 (199 aa).

50-54 (RIHSE) contributes to the GTP binding site. Zn(2+) contacts are provided by cysteine 55, cysteine 66, and cysteine 68. Residues glutamine 71, 93–95 (EGR), and threonine 115 each bind GTP. Aspartate 127 acts as the Proton acceptor in catalysis. Arginine 129 functions as the Nucleophile in the catalytic mechanism. Positions 150 and 155 each coordinate GTP.

It belongs to the GTP cyclohydrolase II family. As to quaternary structure, homodimer. It depends on Zn(2+) as a cofactor.

The enzyme catalyses GTP + 4 H2O = 2,5-diamino-6-hydroxy-4-(5-phosphoribosylamino)-pyrimidine + formate + 2 phosphate + 3 H(+). It participates in cofactor biosynthesis; riboflavin biosynthesis; 5-amino-6-(D-ribitylamino)uracil from GTP: step 1/4. Functionally, catalyzes the conversion of GTP to 2,5-diamino-6-ribosylamino-4(3H)-pyrimidinone 5'-phosphate (DARP), formate and pyrophosphate. In Buchnera aphidicola subsp. Baizongia pistaciae (strain Bp), this protein is GTP cyclohydrolase-2.